A 228-amino-acid polypeptide reads, in one-letter code: Somatolactin (228 aa).

The signal sequence occupies residues 1-24 (MFSIRMNKVLQGFVCLMLTHRIVG). 3 disulfide bridges follow: cysteine 29–cysteine 38, cysteine 88–cysteine 200, and cysteine 217–cysteine 225. Residues asparagine 141 and asparagine 177 are each glycosylated (N-linked (GlcNAc...) asparagine).

The protein belongs to the somatotropin/prolactin family.

The protein resides in the secreted. In Anguilla anguilla (European freshwater eel), this protein is Somatolactin.